The chain runs to 607 residues: Leucine-rich repeat-containing protein 63 (607 aa).

LRR repeat units follow at residues 357–378, 380–401, 403–424, 426–447, 449–470, 471–497, and 498–524; these read QLVYLNLSYNDLHQFPGEVLYL, NLQVLKLRNNPIREIPSEIQQL, YLRKFTIAFNFITSLPAGLFCL, YLEELDVSYNEIENIPNEIQKL, SLEKLTVDGTNITAFPPGILKL, NLVKLEFENTFTIPPFWLENSCNNPPR, and LTHICSLFIVKNNLHKILDYDPVVVQK.

The polypeptide is Leucine-rich repeat-containing protein 63 (Lrrc63) (Rattus norvegicus (Rat)).